We begin with the raw amino-acid sequence, 232 residues long: Phosphoglycolate phosphatase (232 aa).

Catalysis depends on D8, which acts as the Nucleophile. Mg(2+)-binding residues include D8 and D10. K156 lines the substrate pocket. The Mg(2+) site is built by D179 and D183.

This sequence belongs to the archaeal SPP-like hydrolase family. The cofactor is Mg(2+).

The enzyme catalyses 2-phosphoglycolate + H2O = glycolate + phosphate. Catalyzes the dephosphorylation of 2-phosphoglycolate. In Methanopyrus kandleri (strain AV19 / DSM 6324 / JCM 9639 / NBRC 100938), this protein is Phosphoglycolate phosphatase.